We begin with the raw amino-acid sequence, 95 residues long: uncharacterized protein (95 aa).

Residues 29–53 traverse the membrane as a helical segment; sequence LVSTATCMAALFLRFKLIAWVAFIL.

It is found in the membrane. This is an uncharacterized protein from Schizosaccharomyces pombe (strain 972 / ATCC 24843) (Fission yeast).